The following is a 560-amino-acid chain: Nuclear receptor subfamily 5 group A member 2 (560 aa).

The tract at residues 17-54 (GLPAIAPAPGSETPHSPKLEEKHREKRAGLPDRHRRPI) is disordered. A compositionally biased stretch (basic and acidic residues) spans 31–48 (HSPKLEEKHREKRAGLPD). The nuclear receptor DNA-binding region spans 104–179 (EELCPVCGDK…VGMKLEAVRA (76 aa)). Cysteine 107, cysteine 110, cysteine 124, cysteine 127, cysteine 143, cysteine 149, cysteine 159, and cysteine 162 together coordinate Zn(2+). 2 consecutive NR C4-type zinc fingers follow at residues 107–127 (CPVCGDKVSGYHYGLLTCESC) and 143–162 (CIENQNCQIDKTQRKRCPYC). A C-terminal extension (CTE) region spans residues 173–188 (KLEAVRADRMRGGRNK). Positions 189 to 208 (FGPMYKRDRALKQQKKALIR) match the FTZ-F1 box motif. Lysine 289 participates in a covalent cross-link: Glycyl lysine isopeptide (Lys-Gly) (interchain with G-Cter in SUMO1). The 240-residue stretch at 319-558 (SIPHLILELL…NLLIEMLHAK (240 aa)) folds into the NR LBD domain. A phospholipid derivative is bound by residues tyrosine 535 and lysine 539. Positions 547–558 (YNNLLIEMLHAK) are AF-2.

The protein belongs to the nuclear hormone receptor family. NR5 subfamily. As to quaternary structure, monomer; Binds DNA as a monomer. Interacts with nuclear receptor corepressors NR0B1 and NR0B2; repressing NR5A2 nuclear receptor activity. Interacts with nuclear receptor coactivators CTNNB1, PPARGC1A and NCOA2; interaction takes place following ligand-binding and promotes target gene activation. Interacts (when sumoylated) with GPS2; interaction with GPS2 onto hepatic acute phase protein promoters prevents N-Cor corepressor complex dissociation. Interacts with HNF1A. Interacts with GRIP1. In terms of processing, sumoylated by SUMO1 at Lys-289 during the hepatic acute phase response, leading to promote interaction with GPS2 and prevent N-Cor corepressor complex dissociation.

Its subcellular location is the nucleus. It is found in the chromosome. Functionally, orphan nuclear receptor that binds DNA as a monomer to the 5'-TCAAGGCCA-3' sequence and controls expression of target genes: regulates key biological processes, such as early embryonic development, cholesterol and bile acid synthesis pathways, as well as liver and pancreas morphogenesis. Ligand-binding causes conformational change which causes recruitment of coactivators, promoting target gene activation. The specific ligand is unknown, but specific phospholipids, such as phosphatidylethanolamine, phosphatidylserine, dilauroyl phosphatidylcholine and diundecanoyl phosphatidylcholine can act as ligand in vitro. Acts as a pioneer transcription factor, which unwraps target DNA from histones and elicits local opening of closed chromatin. Plays a central role during preimplantation stages of embryonic development. Plays a minor role in zygotic genome activation (ZGA) by regulating a small set of two-cell stage genes. Plays a major role in morula development (2-16 cells embryos) by acting as a master regulator at the 8-cell stage, controlling expression of lineage-specifying transcription factors and genes involved in mitosis, telomere maintenance and DNA repair. Zygotic NR5A2 binds to both closed and open chromatin with other transcription factors, often at SINE B1/Alu repeats DNA elements, promoting chromatin accessibility at nearby regulatory regions. Also involved in the epiblast stage of development and embryonic stem cell pluripotency, by promoting expression of POU5F1/OCT4. Regulates other processes later in development, such as formation of connective tissue in lower jaw and middle ear, neural stem cell differentiation, ovarian follicle development and Sertoli cell differentiation. Involved in exocrine pancreas development and acinar cell differentiation. Acts as an essential transcriptional regulator of lipid metabolism. Key regulator of cholesterol 7-alpha-hydroxylase gene (CYP7A) expression in liver. Also acts as a negative regulator of inflammation in different organs, such as, liver and pancreas. Protects against intestinal inflammation via its ability to regulate glucocorticoid production. Plays an anti-inflammatory role during the hepatic acute phase response by acting as a corepressor: inhibits the hepatic acute phase response by preventing dissociation of the N-Cor corepressor complex. Acts as a regulator of immunity by promoting lymphocyte T-cell development, proliferation and effector functions. Also involved in resolution of endoplasmic reticulum stress in the liver. This chain is Nuclear receptor subfamily 5 group A member 2, found in Rattus norvegicus (Rat).